Consider the following 354-residue polypeptide: UDP-2,3-diacetamido-2,3-dideoxy-D-glucuronate 2-epimerase (354 aa).

This sequence belongs to the UDP-N-acetylglucosamine 2-epimerase family.

It carries out the reaction UDP-2,3-diacetamido-2,3-dideoxy-alpha-D-glucuronate = UDP-2,3-diacetamido-2,3-dideoxy-alpha-D-mannuronate. Its pathway is bacterial outer membrane biogenesis; LPS O-antigen biosynthesis. Functionally, plays a role in the biosynthesis of B-band O antigen for serotype O5. Catalyzes the epimerization of UDP-2,3-diacetamido-2,3-dideoxy-alpha-D-glucuronic acid (UDP-alpha-D-GlcNAc3NAcA) to UDP-2,3-diacetamido-2,3-dideoxy-alpha-D-mannuronic acid (UDP-alpha-D-ManNAc3NAcA). Exhibits high specificity towards the substrate as UDP-alpha-D-GlcNAc, UDP-alpha-D-GlcNAcA (UDP-2-acetamido-2-deoxy-alpha-D-glucuronic acid) and UDP-alpha-D-GlcNAc3NAc (UDP-2,3-diacetamido-2,3-dideoxy-alpha-D-glucose) cannot act as substrates. The polypeptide is UDP-2,3-diacetamido-2,3-dideoxy-D-glucuronate 2-epimerase (Pseudomonas aeruginosa (strain ATCC 15692 / DSM 22644 / CIP 104116 / JCM 14847 / LMG 12228 / 1C / PRS 101 / PAO1)).